We begin with the raw amino-acid sequence, 745 residues long: Polyribonucleotide nucleotidyltransferase (745 aa).

Residues D487 and D493 each coordinate Mg(2+). The KH domain maps to 554-613; it reads PSSTTVKIDKDKIKDIIGPGGKIIKEICETSNAKIDISDDGTVSIYASDRDKIKIALDKI. Positions 623–691 constitute an S1 motif domain; sequence GEIFNGTVMK…NKGKAKLTIK (69 aa). The disordered stretch occupies residues 693–732; it reads AYKDHSSNNTKQKNNVKDDSESEQRRDTSKKRTWNEDNNT. Residues 707–719 are compositionally biased toward basic and acidic residues; that stretch reads NVKDDSESEQRRD.

The protein belongs to the polyribonucleotide nucleotidyltransferase family. The cofactor is Mg(2+).

The protein localises to the cytoplasm. The catalysed reaction is RNA(n+1) + phosphate = RNA(n) + a ribonucleoside 5'-diphosphate. Involved in mRNA degradation. Catalyzes the phosphorolysis of single-stranded polyribonucleotides processively in the 3'- to 5'-direction. The protein is Polyribonucleotide nucleotidyltransferase of Rickettsia prowazekii (strain Madrid E).